Reading from the N-terminus, the 800-residue chain is MAVSKITLHYAQTTGGSNEAAAAFPWNTPKKAVNPYLDPAEFAPESALSNLIALYAVDNEQEQLRRETLSDEVWERYFFNESRDPVQREMEQDRLISHAKTAREQQRFNPDLVIIANVGAQPAHISKPLLERIKYFHSLGRAKAYSRYLQKTIRPCLERLERVRDSQVSASFRFMASHDGLEGLLVLPEMNQDQVKRLSTLVAAHMSMCLDAACGDLFVSDDVKPEEIRQAWERVAAEAMRLEVIPPAFEQLRRKKRRRKPVPYELIPPSLARMLCADWWYRKLWQMRCEWREEQLRAVCLVNKKASPYVSYEAVIHKREQRRKSLEFFRSHELINEDGDTLDMEDVVNASNSNPAHRRNEMMACVKGLELIAEMRGDCAVFYTITCPSRFHATLNNGRPNPKWTSATVRQSSDYLVDTFAAFRKAMHKAGLRWYGVRVAEPHHDGTVHWHLLCFMRKKDRRSITALLRKFAIREDREELGANTGPRFKPELINPRKGTPTSYIAKYISKNIDGRGLAKEISKETGRSLRDSAEHVSAWASLHRVQQFRFFGIPGRQAYRELRLLAGQAARVQGERKAGAPVLDNPRLDAVLAAADAGCFATYIMKQGGVLVPRKHHLVRTAYELNDEPSAYGDHGIRIYGIWSPIAEGKICTHAVKWKKVRKAVDVQEAAADQGACAPWTRGNNCPPVENLNKSGGDLPDIKTMNEKELQDYLHNMGQKERRELTARLRLVKPKRKTVYKQNISEQQRLQLEAELTARGFEGSASEIDLLLRGGSIPSGAGLRIFYRNHRLQEDDKWRQ.

Active-site O-(5'-phospho-DNA)-tyrosine intermediate residues include Tyr503 and Tyr507.

It belongs to the phage GPA family.

Its function is as follows. Possible endonuclease which induces a single-strand cut and initiates DNA replication. This is Probable replication endonuclease from prophage-like region from Salmonella paratyphi A (strain ATCC 9150 / SARB42).